The sequence spans 1253 residues: Methionine synthase (1253 aa).

One can recognise a Hcy-binding domain in the interval 6 to 326 (QDEIEAILRK…DHIREIAEAV (321 aa)). Residues Cys-248, Cys-311, and Cys-312 each contribute to the Zn(2+) site. The Pterin-binding domain occupies 359 to 620 (FVNIGERCNV…IHKDLLQLCE (262 aa)). Residues 370–372 (GSK), Asp-437, Asn-458, Asp-525, Asn-567, Arg-573, and Arg-579 contribute to the (6S)-5,6,7,8-tetrahydrofolate site. One can recognise a B12-binding N-terminal domain in the interval 650–747 (QTDEWRNGSI…FMEKEREEAR (98 aa)). Methylcob(III)alamin contacts are provided by residues Glu-697, 770–774 (GDVHD), His-773, Ser-818, Thr-822, and Ala-874. The B12-binding domain occupies 760–895 (QGTIVLATVK…DENLKDDYFE (136 aa)). Residues 911 to 1253 (SLKERKYLPL…LGPILGYDTD (343 aa)) enclose the AdoMet activation domain. Residues Asp-962, Arg-1160, and 1215–1216 (YF) each bind S-adenosyl-L-methionine. Thr-1252 is subject to Phosphothreonine.

The protein belongs to the vitamin-B12 dependent methionine synthase family. Monomer. Dimer. Forms a multiprotein complex with MMACHC, MMADHC and MTRR. Methylcob(III)alamin serves as cofactor. The cofactor is Zn(2+).

It localises to the cytoplasm. The catalysed reaction is (6S)-5-methyl-5,6,7,8-tetrahydrofolate + L-homocysteine = (6S)-5,6,7,8-tetrahydrofolate + L-methionine. Its pathway is amino-acid biosynthesis; L-methionine biosynthesis via de novo pathway; L-methionine from L-homocysteine (MetH route): step 1/1. Its function is as follows. Catalyzes the transfer of a methyl group from methylcob(III)alamin (MeCbl) to homocysteine, yielding enzyme-bound cob(I)alamin and methionine in the cytosol. MeCbl is an active form of cobalamin (vitamin B12) used as a cofactor for methionine biosynthesis. Cob(I)alamin form is regenerated to MeCbl by a transfer of a methyl group from 5-methyltetrahydrofolate. The processing of cobalamin in the cytosol occurs in a multiprotein complex composed of at least MMACHC, MMADHC, MTRR (methionine synthase reductase) and MTR which may contribute to shuttle safely and efficiently cobalamin towards MTR in order to produce methionine. This chain is Methionine synthase (Mtr), found in Rattus norvegicus (Rat).